A 331-amino-acid chain; its full sequence is Olfactory receptor 6K3 (331 aa).

At 1 to 41 (MCWTMPSPFTGSSTRNMESGNQSTVTEFIFTGFPQLQDGSL) the chain is on the extracellular side. N21 carries an N-linked (GlcNAc...) asparagine glycan. Residues 42–62 (LYFFPLLFIYTFIIIDNLLIF) form a helical membrane-spanning segment. Topologically, residues 63–70 (SAVRLDTH) are cytoplasmic. Residues 71–91 (LHNPMYNFISIFSFLEIWYTT) form a helical membrane-spanning segment. Residues 92–115 (ATIPKMLSNLISEKKAISMTGCIL) are Extracellular-facing. C113 and C205 form a disulfide bridge. A helical membrane pass occupies residues 116–136 (QMYFFHSLENSEGILLTTMAI). Residues 137 to 155 (DRYVAICNPLRYQMIMTPR) are Cytoplasmic-facing. The chain crosses the membrane as a helical span at residues 156–176 (LCAQLSAGSCLFGFLILLPEI). Over 177 to 212 (VMISTLPFCGPNQIHQIFCDLVPVLSLACTDTSMIL) the chain is Extracellular. The helical transmembrane segment at 213–232 (IEDVIHAVTIIITFLIIALS) threads the bilayer. Residues 233–252 (YVRIVTVILRIPSSEGRQKA) lie on the Cytoplasmic side of the membrane. The helical transmembrane segment at 253–273 (FSTCAGHLMVFPIFFGSVSLM) threads the bilayer. Topologically, residues 274–286 (YLRFSDTYPPVLD) are extracellular. A helical transmembrane segment spans residues 287-307 (TAIALMFTVLAPFFNPIIYSL). Topologically, residues 308–331 (RNKDMNNAIKKLFCLQKVLNKPGG) are cytoplasmic.

The protein belongs to the G-protein coupled receptor 1 family.

It is found in the cell membrane. Its function is as follows. Odorant receptor. This Homo sapiens (Human) protein is Olfactory receptor 6K3 (OR6K3).